Consider the following 380-residue polypeptide: Hydrogenase maturation factor HypD2 (380 aa).

Fe cation-binding residues include C36, C64, and C67.

It belongs to the HypD family. [4Fe-4S] cluster is required as a cofactor.

It participates in protein modification; [NiFe] hydrogenase maturation. Functionally, involved in the maturation of [NiFe] hydrogenases. Involved in the biosynthesis of the Fe(CN)(2)CO cofactor. The chain is Hydrogenase maturation factor HypD2 (hypD2) from Bradyrhizobium diazoefficiens (strain JCM 10833 / BCRC 13528 / IAM 13628 / NBRC 14792 / USDA 110).